We begin with the raw amino-acid sequence, 140 residues long: Austinoid biosynthesis clusters protein S (140 aa).

This sequence belongs to the trt14 isomerase family. Homodimer.

It participates in secondary metabolite biosynthesis; terpenoid biosynthesis. Functionally, part of the gene cluster B that mediates the biosynthesis of austinol and dehydroaustinol, two fungal meroterpenoids. The first step of the pathway is the synthesis of 3,5-dimethylorsellinic acid by the polyketide synthase ausA. 3,5-dimethylorsellinic acid is then prenylated by the polyprenyl transferase ausN. Further epoxidation by the FAD-dependent monooxygenase ausM and cyclization by the probable terpene cyclase ausL lead to the formation of protoaustinoid A. Protoaustinoid A is then oxidized to spiro-lactone preaustinoid A3 by the combined action of the FAD-binding monooxygenases ausB and ausC, and the dioxygenase ausE. Acid-catalyzed keto-rearrangement and ring contraction of the tetraketide portion of preaustinoid A3 by ausJ lead to the formation of preaustinoid A4. The aldo-keto reductase ausK, with the help of ausH, is involved in the next step by transforming preaustinoid A4 into isoaustinone which is in turn hydroxylated by the P450 monooxygenase ausI to form austinolide. Finally, the cytochrome P450 monooxygenase ausG modifies austinolide to austinol. Austinol can be further modified to dehydroaustinol which forms a diffusible complex with diorcinol that initiates conidiation. Due to genetic rearrangements of the clusters and the subsequent loss of some enzymes, the end products of the Emericella nidulans austinoid biosynthesis clusters are austinol and dehydroaustinol, even if additional enzymes, such as the O-acetyltransferase ausQ and the cytochrome P450 monooxygenase ausR are still functional. AusS is necessary for austinoids production and may play a possible function as a regulator. This is Austinoid biosynthesis clusters protein S from Emericella nidulans (strain FGSC A4 / ATCC 38163 / CBS 112.46 / NRRL 194 / M139) (Aspergillus nidulans).